The primary structure comprises 209 residues: High frequency lysogenization protein HflD homolog (209 aa).

Positions 79-121 (QGLNAELTRYTLSLMVLERKLNSAKGAMDTLGDRIAGLQRQLD) form a coiled coil.

This sequence belongs to the HflD family.

It localises to the cytoplasm. The protein resides in the cell inner membrane. The sequence is that of High frequency lysogenization protein HflD homolog from Enterobacter sp. (strain 638).